The sequence spans 451 residues: uncharacterized protein (451 aa).

The first 22 residues, 1 to 22 (MKLKLIFSLFLVLVFCSLFVFG), serve as a signal peptide directing secretion. Residues N25, N45, N209, N326, and N402 are each glycosylated (N-linked (GlcNAc...) asparagine).

The protein localises to the secreted. This is an uncharacterized protein from Dictyostelium discoideum (Social amoeba).